The primary structure comprises 326 residues: AA9 family lytic polysaccharide monooxygenase B (326 aa).

The N-terminal stretch at 1–19 (MKSFTIAALAALWAQEAAA) is a signal peptide. Residues His20 and His98 each contribute to the Cu(2+) site. Cys57 and Cys192 form a disulfide bridge. O2-binding residues include His178 and Gln187. Tyr189 contacts Cu(2+). Positions 265-281 (PSATLTQPTSTATATSA) are enriched in low complexity. Positions 265–286 (PSATLTQPTSTATATSAPGGGG) are disordered. The region spanning 289-326 (CTAAKYQQCGGTGYTGCTTCASGSTCSAVSPPYYSQCL) is the CBM1 domain.

The protein belongs to the polysaccharide monooxygenase AA9 family. It depends on Cu(2+) as a cofactor.

Its subcellular location is the secreted. The catalysed reaction is [(1-&gt;4)-beta-D-glucosyl]n+m + reduced acceptor + O2 = 4-dehydro-beta-D-glucosyl-[(1-&gt;4)-beta-D-glucosyl]n-1 + [(1-&gt;4)-beta-D-glucosyl]m + acceptor + H2O.. In terms of biological role, lytic polysaccharide monooxygenase (LPMO) that depolymerizes crystalline and amorphous polysaccharides via the oxidation of scissile alpha- or beta-(1-4)-glycosidic bonds, yielding C1 and C4 oxidation products. Catalysis by LPMOs requires the reduction of the active-site copper from Cu(II) to Cu(I) by a reducing agent and H(2)O(2) or O(2) as a cosubstrate. Shows no activity on wheat arabinoxylan, konjac glucomannan, acetylated spruce galactoglucomannan, or cellopentaose. The protein is AA9 family lytic polysaccharide monooxygenase B of Thermothielavioides terrestris (strain ATCC 38088 / NRRL 8126) (Thielavia terrestris).